Here is a 649-residue protein sequence, read N- to C-terminus: Replication protein E1 (649 aa).

The short motif at 87–89 is the Nuclear localization signal element; the sequence is KRK. Phosphoserine; by host occurs at positions 93 and 107. Positions 106-115 match the Nuclear export signal motif; the sequence is ISPRLKAICI. The interval 186–352 is DNA-binding region; the sequence is ICQTPLTNIL…QTVLQHSFND (167 aa). One can recognise an SF3 helicase domain in the interval 451–601; the sequence is VEFMSFLTAL…FPFDENGNPV (151 aa). 477–484 is a binding site for ATP; sequence GAANTGKS. Residue Lys558 forms a Glycyl lysine isopeptide (Lys-Gly) (interchain with G-Cter in SUMO) linkage. The disordered stretch occupies residues 624–649; it reads EDEDKENDGDSLPTFKCVSGQNTNTL.

Belongs to the papillomaviridae E1 protein family. In terms of assembly, can form hexamers. Interacts with E2 protein; this interaction increases E1 DNA binding specificity. Interacts with host DNA polymerase subunit POLA2. Interacts with host single stranded DNA-binding protein RPA1. Interacts with host TOP1; this interaction stimulates the enzymatic activity of TOP1. In terms of processing, phosphorylated. Sumoylated.

The protein resides in the host nucleus. It catalyses the reaction Couples ATP hydrolysis with the unwinding of duplex DNA by translocating in the 3'-5' direction.. The enzyme catalyses ATP + H2O = ADP + phosphate + H(+). Functionally, ATP-dependent DNA 3'-5' helicase required for initiation of viral DNA replication. It forms a complex with the viral E2 protein. The E1-E2 complex binds to the replication origin which contains binding sites for both proteins. During the initial step, a dimer of E1 interacts with a dimer of protein E2 leading to a complex that binds the viral origin of replication with high specificity. Then, a second dimer of E1 displaces the E2 dimer in an ATP-dependent manner to form the E1 tetramer. Following this, two E1 monomers are added to each half of the site, which results in the formation of two E1 trimers on the viral ori. Subsequently, two hexamers will be created. The double hexamer acts as a bi-directional helicase machinery and unwinds the viral DNA and then recruits the host DNA polymerase to start replication. The chain is Replication protein E1 from Human papillomavirus type 16.